The following is a 184-amino-acid chain: CASP-like protein 1U1 (184 aa).

Over 1 to 30 (MSSTGTTLSASEGDKGFRNGAAPAKSKSHS) the chain is Cytoplasmic. The helical transmembrane segment at 31–51 (TIALLRLLAFAATLSAFVTMI) threads the bilayer. Topologically, residues 52–76 (TNKQKITIGPFTRWSKWHYSDAFMW) are extracellular. The helical transmembrane segment at 77–97 (FVVANCIAFIYLLFAAILGLI) threads the bilayer. At 98 to 111 (SHSPMLVKHLVILD) the chain is on the cytoplasmic side. The chain crosses the membrane as a helical span at residues 112-132 (LIVSYMLFSAASAATAVAYIG). Over 133–154 (KNGISQPGWTAICGVFERYCHH) the chain is Extracellular. The helical transmembrane segment at 155-175 (VAGALVACFLGWLFLTIAVFL) threads the bilayer. Topologically, residues 176-184 (GMRRSPAAV) are cytoplasmic.

The protein belongs to the Casparian strip membrane proteins (CASP) family. In terms of assembly, homodimer and heterodimers.

It localises to the cell membrane. This is CASP-like protein 1U1 from Marchantia polymorpha (Common liverwort).